A 461-amino-acid chain; its full sequence is RCC1-like G exchanging factor-like protein (461 aa).

Residues 1–10 (MLAAARALRG) are compositionally biased toward low complexity. A mitochondrion-targeting transit peptide spans 1–34 (MLAAARALRGPRPRWPTPAREHWTPAGRSRSRRE). The disordered stretch occupies residues 1 to 35 (MLAAARALRGPRPRWPTPAREHWTPAGRSRSRREA). RCC1 repeat units lie at residues 55 to 121 (ADRV…LSSK), 125 to 188 (VTKV…VLTD), 190 to 244 (EGVF…FLTD), 245 to 297 (KGEV…ALSA), 298 to 350 (DGGV…VLNA), 352 to 408 (GHVF…ALTN), and 409 to 458 (KGEL…TLAK).

As to quaternary structure, forms a regulatory protein-RNA complex, consisting of RCC1L, NGRN, RPUSD3, RPUSD4, TRUB2, FASTKD2 and 16S mt-rRNA. Interacts with 16S mt-rRNA; this interaction is direct. Interacts with OPA1; this interaction is direct. In terms of tissue distribution, at E8.5, broadly expressed in yolk sac placenta, decidua, and embryo, with highest levels found in the trophoblast giant cells (TGCs) and ectoplacental cone (at protein level).

It is found in the mitochondrion inner membrane. Functionally, guanine nucleotide exchange factor (GEF) for mitochondrial dynamin-related GTPase OPA1. Activates OPA1, by exchanging bound GDP for free GTP, and drives OPA1 and MFN1-dependent mitochondrial fusion. Plays an essential role in mitochondrial ribosome biogenesis. As a component of a functional protein-RNA module, consisting of RCC1L, NGRN, RPUSD3, RPUSD4, TRUB2, FASTKD2 and 16S mitochondrial ribosomal RNA (16S mt-rRNA), controls 16S mt-rRNA abundance and is required for intra-mitochondrial translation of core subunits of the oxidative phosphorylation system. In Mus musculus (Mouse), this protein is RCC1-like G exchanging factor-like protein.